The primary structure comprises 276 residues: Elongation factor Ts (276 aa).

The tract at residues 79–82 is involved in Mg(2+) ion dislocation from EF-Tu; sequence TDFV.

It belongs to the EF-Ts family.

The protein resides in the cytoplasm. Functionally, associates with the EF-Tu.GDP complex and induces the exchange of GDP to GTP. It remains bound to the aminoacyl-tRNA.EF-Tu.GTP complex up to the GTP hydrolysis stage on the ribosome. This is Elongation factor Ts from Buchnera aphidicola subsp. Cinara cedri (strain Cc).